The sequence spans 81 residues: Sulfur carrier protein TusA (81 aa).

Cysteine 19 (cysteine persulfide intermediate) is an active-site residue.

The protein belongs to the sulfur carrier protein TusA family. As to quaternary structure, interacts with IscS.

It localises to the cytoplasm. It functions in the pathway tRNA modification. Functionally, sulfur carrier protein involved in sulfur trafficking in the cell. Part of a sulfur-relay system required for 2-thiolation during synthesis of 2-thiouridine of the modified wobble base 5-methylaminomethyl-2-thiouridine (mnm(5)s(2)U) in tRNA. Interacts with IscS and stimulates its cysteine desulfurase activity. Accepts an activated sulfur from IscS, which is then transferred to TusD, and thus determines the direction of sulfur flow from IscS to 2-thiouridine formation. Also appears to be involved in sulfur transfer for the biosynthesis of molybdopterin. This is Sulfur carrier protein TusA from Pectobacterium atrosepticum (strain SCRI 1043 / ATCC BAA-672) (Erwinia carotovora subsp. atroseptica).